Here is a 66-residue protein sequence, read N- to C-terminus: SPbeta prophage-derived uncharacterized protein YosK (66 aa).

The chain is SPbeta prophage-derived uncharacterized protein YosK (yosK) from Bacillus subtilis (strain 168).